An 805-amino-acid polypeptide reads, in one-letter code: Arginine/serine-rich protein PNISR (805 aa).

Positions 75-88 (NNHGNFQGDSNFNR) are enriched in polar residues. 2 disordered regions span residues 75 to 331 (NNHG…EEKE) and 382 to 805 (LTGL…SRSR). 2 stretches are compositionally biased toward pro residues: residues 100 to 115 (PPHP…PAPG) and 183 to 194 (YWQPGPPGPPAP). Residues 197-210 (NRRERPPSFRDRQR) are compositionally biased toward basic and acidic residues. Phosphoserine is present on residues S204 and S211. Residue K218 forms a Glycyl lysine isopeptide (Lys-Gly) (interchain with G-Cter in SUMO2) linkage. The stretch at 237–276 (REGLEKMEREKQKKLEKERMEQQRSQLSKKEKKATEDAEG) forms a coiled coil. Residues 238–258 (EGLEKMEREKQKKLEKERMEQ) show a composition bias toward basic and acidic residues. Phosphoserine is present on residues S290, S304, S313, and S321. Residues 290–299 (SDEEDEDAEN) are compositionally biased toward acidic residues. A compositionally biased stretch (gly residues) spans 384–393 (GLGGLGGYGS). A compositionally biased stretch (basic and acidic residues) spans 421–463 (QKQEAFWRKEKEQQLLQDKQIEEEKQQTERVTKEMNEFIHREQ). The stretch at 427-461 (WRKEKEQQLLQDKQIEEEKQQTERVTKEMNEFIHR) forms a coiled coil. S465 and S467 each carry phosphoserine. Basic and acidic residues-rich tracts occupy residues 473-486 (EADR…KRTP) and 494-508 (EPKR…ERGS). Residue T485 is modified to Phosphothreonine. Residue K496 forms a Glycyl lysine isopeptide (Lys-Gly) (interchain with G-Cter in SUMO2) linkage. The segment covering 509 to 550 (RSGSSSSGSSSSGSRTSSSSSSVSSSSYSSSSGSSCTSSRSS) has biased composition (low complexity). Basic residues-rich tracts occupy residues 551-560 (SPKRRKRPSR), 567-579 (KARR…YSRR), 587-598 (TRGKLRDRRRSN), and 607-639 (RRNR…SRDR). Positions 659–721 (EAKEQDRKKE…KRKRESERTF (63 aa)) are enriched in basic and acidic residues. Residue K703 forms a Glycyl lysine isopeptide (Lys-Gly) (interchain with G-Cter in SUMO2) linkage. A Phosphoserine modification is found at S726. The span at 732–753 (IRHDSRQDSKKNATKDSKRHSG) shows a compositional bias: basic and acidic residues. The span at 754–767 (SDSSGRSSSESPGS) shows a compositional bias: low complexity. Composition is skewed to basic residues over residues 771–781 (KKAKKPKHSRS) and 789–805 (RSGK…SRSR).

Belongs to the splicing factor SR family. Interacts with PNN.

It localises to the nucleus speckle. The chain is Arginine/serine-rich protein PNISR (Pnisr) from Mus musculus (Mouse).